The chain runs to 62 residues: Large ribosomal subunit protein uL30 (62 aa).

Belongs to the universal ribosomal protein uL30 family. In terms of assembly, part of the 50S ribosomal subunit.

The protein is Large ribosomal subunit protein uL30 of Beutenbergia cavernae (strain ATCC BAA-8 / DSM 12333 / CCUG 43141 / JCM 11478 / NBRC 16432 / NCIMB 13614 / HKI 0122).